The sequence spans 282 residues: Bifunctional protein FolD (282 aa).

NADP(+)-binding positions include 166–168 (GRS) and Ser-191.

It belongs to the tetrahydrofolate dehydrogenase/cyclohydrolase family. In terms of assembly, homodimer.

It carries out the reaction (6R)-5,10-methylene-5,6,7,8-tetrahydrofolate + NADP(+) = (6R)-5,10-methenyltetrahydrofolate + NADPH. The enzyme catalyses (6R)-5,10-methenyltetrahydrofolate + H2O = (6R)-10-formyltetrahydrofolate + H(+). It participates in one-carbon metabolism; tetrahydrofolate interconversion. Catalyzes the oxidation of 5,10-methylenetetrahydrofolate to 5,10-methenyltetrahydrofolate and then the hydrolysis of 5,10-methenyltetrahydrofolate to 10-formyltetrahydrofolate. This chain is Bifunctional protein FolD, found in Acidovorax ebreus (strain TPSY) (Diaphorobacter sp. (strain TPSY)).